The primary structure comprises 445 residues: Pre-B-cell leukemia transcription factor 2 (445 aa).

The segment at 13–44 is disordered; the sequence is VGIPGLPIHGGPQTLTPHPMHEPPTDNGEPRK. Positions 31–44 are enriched in basic and acidic residues; it reads PMHEPPTDNGEPRK. Residues 42-236 form the PBC domain; that stretch reads PRKQDIGDIL…VMILRSRFLD (195 aa). The interval 49–128 is PBC-A; sequence DILQQIMTIT…EGVAGPEKGG (80 aa). The tract at residues 131–236 is PBC-B; that stretch reads AAAAAAAAAS…VMILRSRFLD (106 aa). A DNA-binding region (homeobox; TALE-type) is located at residues 237-299; that stretch reads ARRKRRNFSK…NKRIRYKKNI (63 aa). Residues 319 to 332 show a composition bias toward polar residues; the sequence is QGGHSGANSPTTPT. Positions 319 to 338 are disordered; sequence QGGHSGANSPTTPTSAGSGG.

This sequence belongs to the TALE/PBX homeobox family.

It localises to the nucleus. Functionally, transcriptional activator that binds the sequence 5'-ATCAATCAA-3'. This Xenopus laevis (African clawed frog) protein is Pre-B-cell leukemia transcription factor 2 (pbx2).